We begin with the raw amino-acid sequence, 89 residues long: Small ribosomal subunit protein uS17A (89 aa).

This sequence belongs to the universal ribosomal protein uS17 family. In terms of assembly, part of the 30S ribosomal subunit.

Its function is as follows. One of the primary rRNA binding proteins, it binds specifically to the 5'-end of 16S ribosomal RNA. The polypeptide is Small ribosomal subunit protein uS17A (Bacteroides thetaiotaomicron (strain ATCC 29148 / DSM 2079 / JCM 5827 / CCUG 10774 / NCTC 10582 / VPI-5482 / E50)).